We begin with the raw amino-acid sequence, 202 residues long: Glycerol-3-phosphate acyltransferase (202 aa).

A run of 4 helical transmembrane segments spans residues 2 to 22, 82 to 102, 119 to 139, and 158 to 178; these read ANLL…AVVV, DTGL…PVFH, AIDP…AFFF, and VLMN…VLLI.

This sequence belongs to the PlsY family. In terms of assembly, probably interacts with PlsX.

The protein localises to the cell inner membrane. The catalysed reaction is an acyl phosphate + sn-glycerol 3-phosphate = a 1-acyl-sn-glycero-3-phosphate + phosphate. Its pathway is lipid metabolism; phospholipid metabolism. Its function is as follows. Catalyzes the transfer of an acyl group from acyl-phosphate (acyl-PO(4)) to glycerol-3-phosphate (G3P) to form lysophosphatidic acid (LPA). This enzyme utilizes acyl-phosphate as fatty acyl donor, but not acyl-CoA or acyl-ACP. The protein is Glycerol-3-phosphate acyltransferase of Cupriavidus taiwanensis (strain DSM 17343 / BCRC 17206 / CCUG 44338 / CIP 107171 / LMG 19424 / R1) (Ralstonia taiwanensis (strain LMG 19424)).